The chain runs to 478 residues: Antiviral innate immune response effector IFIT1 (478 aa).

TPR repeat units lie at residues 52-85 (VGIH…MQEE), 95-128 (LVTW…CKKL), 141-174 (IDCE…DPEN), 183-216 (ISAY…NPDN), 218-249 (YIKV…NMSS), and 251-284 (TYVF…TPTS). W147 serves as a coordination point for mRNA. G190 lines the RNA pocket. The RNA site is built by K259, H289, Q290, and K336. TPR repeat units lie at residues 305 to 339 (ATKG…KPTF), 340 to 373 (EVAH…KPVV), 378 to 412 (QDIH…EQAS), and 437 to 470 (LESL…AADF).

It belongs to the IFIT family. In terms of assembly, component of an interferon-dependent multiprotein complex, at least composed of IFIT1, IFIT2 and IFIT3. Interacts (via TPR repeats 1-4) with RPL15. Interacts with STING1/MITA; could disrupt STING1 interaction with MAVS or TBK1, acting as a negative-feedback regulator of virus-triggered signaling. Interacts with EIF3E; this could be an alternative way to inhibit translation. Phosphorylated. In terms of processing, ISGylated.

Its subcellular location is the cytoplasm. Its function is as follows. Plays a key role in the innate immune response as part of an interferon-dependent multiprotein complex, recognizing and sequestering viral RNAs that lack host-specific 2'-O-methylation at their 5' cap. By distinguishing these RNAs from host mRNAs, inhibits their translation by competing with the translation initiation factor eIF4E. Could also prevent viral replication through its interaction with DNA replication origin-binding protein E1 of several viruses. Causes the translocation of E1 from the nucleus to the cytoplasm and can also inhibit its helicase activity in vitro. Exhibits antiviral activity against many viruses from the Flaviviridae (West Nile virus, Dengue virus, hepatitis C virus), Coronaviridae (human 229E coronavirus, SARS-CoV-2 and SARS-CoV), Poxviridae (vaccinia virus) and Togaviridae (Sindbis virus) families. This is Antiviral innate immune response effector IFIT1 from Homo sapiens (Human).